The primary structure comprises 314 residues: CBASS oligonucleotide cyclase CdnC (314 aa).

Position 60 (Lys-60) interacts with ATP. 2 residues coordinate Mg(2+): Asp-73 and Asp-75. ATP is bound by residues Asp-75, Lys-186, 197–199 (KSF), and Asn-263.

Belongs to the CD-NTase family. C01 subfamily. As to quaternary structure, forms complexes with Cap7 with 1:1 and 2:2 stoichimetry, and a 1:1:6 CdnC:Cap7:Cap6 complex. Mg(2+) is required as a cofactor.

Its function is as follows. Cyclic nucleotide synthase (second messenger synthase) of a CBASS antivirus system. CBASS (cyclic oligonucleotide-based antiphage signaling system) provides immunity against bacteriophage. The CD-NTase protein synthesizes cyclic nucleotides in response to infection; these serve as specific second messenger signals. The signals activate a diverse range of effectors, leading to bacterial cell death and thus abortive phage infection. A type III CBASS system. Expression of this CBASS system (Cap18-Cap6-Cap7-CdnC-CapW-Cap17) in a susceptible E.coli (strain MG1655) confers resistance to bacteriophage P1. Probable cyclic nucleotide synthase that upon activation catalyzes the synthesis of a cyclic nucleotide. A cyclase activity for this enzyme was not identified in. In Escherichia coli (strain KTE188), this protein is CBASS oligonucleotide cyclase CdnC.